Here is a 213-residue protein sequence, read N- to C-terminus: Orotate phosphoribosyltransferase (213 aa).

Lys-26 contacts 5-phospho-alpha-D-ribose 1-diphosphate. 34–35 contributes to the orotate binding site; the sequence is FF. 5-phospho-alpha-D-ribose 1-diphosphate-binding positions include 72 to 73, Arg-99, Lys-100, Lys-103, His-105, and 124 to 132; these read YK and DDVITAGTA. Positions 128 and 156 each coordinate orotate.

It belongs to the purine/pyrimidine phosphoribosyltransferase family. PyrE subfamily. Homodimer. The cofactor is Mg(2+).

It catalyses the reaction orotidine 5'-phosphate + diphosphate = orotate + 5-phospho-alpha-D-ribose 1-diphosphate. It functions in the pathway pyrimidine metabolism; UMP biosynthesis via de novo pathway; UMP from orotate: step 1/2. Catalyzes the transfer of a ribosyl phosphate group from 5-phosphoribose 1-diphosphate to orotate, leading to the formation of orotidine monophosphate (OMP). The sequence is that of Orotate phosphoribosyltransferase from Edwardsiella ictaluri (strain 93-146).